The sequence spans 174 residues: Thiol-disulfide oxidoreductase ResA (174 aa).

The helical; Signal-anchor for type II membrane protein transmembrane segment at 11 to 30 threads the bilayer; the sequence is TAILLVLLAAIGYTIYTNFF. One can recognise a Thioredoxin domain in the interval 36–174; that stretch reads VAVGSTAPDF…IERHLESIKP (139 aa). Cysteine 74 and cysteine 77 are oxidised to a cystine.

It belongs to the thioredoxin family. ResA subfamily.

It localises to the cell membrane. It participates in protein modification; cytochrome c assembly. Thiol-disulfide oxidoreductase which is required in disulfide reduction during c-type cytochrome synthesis. May accept reducing equivalents from CcdA, leading to breakage of disulfide bonds in apocytochrome c; following this reduction heme can be covalently attached. The sequence is that of Thiol-disulfide oxidoreductase ResA from Geobacillus kaustophilus (strain HTA426).